We begin with the raw amino-acid sequence, 232 residues long: Large ribosomal subunit protein uL1 (232 aa).

Belongs to the universal ribosomal protein uL1 family. As to quaternary structure, part of the 50S ribosomal subunit.

Binds directly to 23S rRNA. The L1 stalk is quite mobile in the ribosome, and is involved in E site tRNA release. Its function is as follows. Protein L1 is also a translational repressor protein, it controls the translation of the L11 operon by binding to its mRNA. This chain is Large ribosomal subunit protein uL1, found in Burkholderia multivorans (strain ATCC 17616 / 249).